A 224-amino-acid polypeptide reads, in one-letter code: UPF0758 protein IL0240 (224 aa).

An MPN domain is found at 102–224 (GFTEPTMVKD…PISFAERGLL (123 aa)). The Zn(2+) site is built by histidine 173, histidine 175, and aspartate 186. The JAMM motif motif lies at 173–186 (HNHPSGVAEPSQAD).

The protein belongs to the UPF0758 family.

In Idiomarina loihiensis (strain ATCC BAA-735 / DSM 15497 / L2-TR), this protein is UPF0758 protein IL0240.